The sequence spans 62 residues: Bacteriocin piscicolin-126 (62 aa).

A propeptide spanning residues 1 to 18 (MKTVKELSVKEMQLTTGG) is cleaved from the precursor. A disulfide bridge connects residues Cys27 and Cys32.

It localises to the secreted. Functionally, inhibits the growth of several Gram-positive bacteria, especially the food-borne pathogen L.monocytogenes, but has no effect on the growth of a number of yeasts and Gram-negative bacteria. This is Bacteriocin piscicolin-126 (pisA) from Carnobacterium maltaromaticum (Carnobacterium piscicola).